We begin with the raw amino-acid sequence, 511 residues long: Gap junction alpha-3 protein (511 aa).

The stretch at 2–15 is an intramembrane region; sequence GDWSFLGRLLENAQ. At 16-19 the chain is on the cytoplasmic side; that stretch reads EHST. The chain crosses the membrane as a helical span at residues 20–40; it reads VIGKVWLTVLFIFRILVLGAA. Topologically, residues 41 to 71 are extracellular; that stretch reads AEEVWGDEQSDFTCNTQQPGCENVCYDKAFP. 3 disulfides stabilise this stretch: Cys54-Cys214, Cys61-Cys208, and Cys65-Cys203. A helical membrane pass occupies residues 72–92; that stretch reads ISHIRFWVLQIIFVSTPTLIY. Residues 93 to 174 are Cytoplasmic-facing; the sequence is LGHVLHIVRM…GALLRTYIFN (82 aa). Positions 110–119 are enriched in basic and acidic residues; the sequence is EEELKKRGSV. Residues 110-143 are disordered; the sequence is EEELKKRGSVKDNNYPGAATSGGGSGGGNNFKDP. Over residues 129 to 138 the composition is skewed to gly residues; sequence TSGGGSGGGN. Residues 175 to 195 form a helical membrane-spanning segment; that stretch reads IIFKTLFEVGFIVGQYFLYGF. The Extracellular segment spans residues 196–223; that stretch reads ELKPVYQCSRPPCPHTVDCFISRPTEKT. The chain crosses the membrane as a helical span at residues 224–244; it reads IFIIFMLVVASVSLLLNMLEI. Over 245-511 the chain is Cytoplasmic; it reads YHLGWKKLKQ…SRARSDDLAV (267 aa). Residues 397–511 form a disordered region; it reads AEQQGKAPSS…SRARSDDLAV (115 aa). Composition is skewed to low complexity over residues 403 to 415 and 440 to 456; these read APSSSAGSSTPSS and TTTNSGSSTSLSGASGS.

The protein belongs to the connexin family. A hemichannel or connexon is composed of a hexamer of connexins. A functional gap junction is formed by the apposition of two hemichannels. During early stages of lens development, interacts with the C-terminus of MIP. As to expression, detected in eye lens.

The protein localises to the cell membrane. Its subcellular location is the cell junction. It localises to the gap junction. Its function is as follows. Structural component of lens fiber gap junctions. Gap junctions are dodecameric channels that connect the cytoplasm of adjoining cells. They are formed by the docking of two hexameric hemichannels, one from each cell membrane. Small molecules and ions diffuse from one cell to a neighboring cell via the central pore. This Gallus gallus (Chicken) protein is Gap junction alpha-3 protein (GJA3).